Consider the following 596-residue polypeptide: Aspartate--tRNA(Asp/Asn) ligase (596 aa).

Glu175 serves as a coordination point for L-aspartate. Residues 199 to 202 are aspartate; it reads QQYK. L-aspartate is bound by residues Arg221 and His454. 221–223 provides a ligand contact to ATP; the sequence is RDE. Glu488 contacts ATP. An L-aspartate-binding site is contributed by Arg495. ATP is bound at residue 540 to 543; the sequence is GIDR.

Belongs to the class-II aminoacyl-tRNA synthetase family. Type 1 subfamily. As to quaternary structure, homodimer.

It is found in the cytoplasm. The enzyme catalyses tRNA(Asx) + L-aspartate + ATP = L-aspartyl-tRNA(Asx) + AMP + diphosphate. In terms of biological role, aspartyl-tRNA synthetase with relaxed tRNA specificity since it is able to aspartylate not only its cognate tRNA(Asp) but also tRNA(Asn). Reaction proceeds in two steps: L-aspartate is first activated by ATP to form Asp-AMP and then transferred to the acceptor end of tRNA(Asp/Asn). This is Aspartate--tRNA(Asp/Asn) ligase from Rhizobium johnstonii (strain DSM 114642 / LMG 32736 / 3841) (Rhizobium leguminosarum bv. viciae).